The chain runs to 386 residues: Glutamate 5-kinase (386 aa).

Lys28 serves as a coordination point for ATP. The substrate site is built by Ser68, Asp155, and Asn167. An ATP-binding site is contributed by Thr187–Asp188. Positions Arg294 to Ile372 constitute a PUA domain.

Belongs to the glutamate 5-kinase family.

The protein resides in the cytoplasm. It catalyses the reaction L-glutamate + ATP = L-glutamyl 5-phosphate + ADP. The protein operates within amino-acid biosynthesis; L-proline biosynthesis; L-glutamate 5-semialdehyde from L-glutamate: step 1/2. Functionally, catalyzes the transfer of a phosphate group to glutamate to form L-glutamate 5-phosphate. This chain is Glutamate 5-kinase, found in Hahella chejuensis (strain KCTC 2396).